Consider the following 352-residue polypeptide: MEDVVIAGIAGKLPESENLQEFWEKLLNGVDMVTEDDRRWKPGMYGLPKRNGKLKDISKFDASFFGVHPKQAHTMDPQLRLLLEVSYEAILDGGINPATLRGTDTGVWVGASGSEAGEAFSQDPEQLLGYSMIGCQRAMFANRISYFYDFKGPSLSIDTACSSSLMALENAYKAIRNGRCSAAVVGGVNLLLKPNTSVQFMKLGMLSPDGACKVFDASGDGYCRSEAVVVVLLTKKSMAKRIYATIVNAGSNTDGFKEQGVTFPSGDMQRQLVSSLHRECGIKPGDIEYVETHGTGTKVGDPQEVNGLADLFCQCEREPLLIGSTKSNMGHPEPASGLAALAKVVLSLEHGL.

Residues 1–352 (MEDVVIAGIA…KVVLSLEHGL (352 aa)) enclose the Ketosynthase family 3 (KS3) domain. Catalysis depends on for beta-ketoacyl synthase activity residues Cys-161, His-293, and His-331.

Homodimer which monomers are arranged in a head to tail fashion.

It catalyses the reaction acetyl-CoA + n malonyl-CoA + 2n NADPH + 2n H(+) = a long-chain fatty acid + (n+1) CoA + n CO2 + 2n NADP(+).. Functionally, fatty acid synthetase catalyzes the formation of long-chain fatty acids from acetyl-CoA, malonyl-CoA and NADPH. This multifunctional protein has 7 catalytic activities as an acyl carrier protein. The sequence is that of Fatty acid synthase (FASN) from Anser anser anser (Western greylag goose).